The chain runs to 139 residues: Small ribosomal subunit protein uS12m (139 aa).

The transit peptide at 1-29 (MSWPGLLYGLTTSLSRGLALAPQLWAARS) directs the protein to the mitochondrion.

The protein belongs to the universal ribosomal protein uS12 family. As to quaternary structure, component of the mitochondrial ribosome small subunit (28S) which comprises a 12S rRNA and about 30 distinct proteins.

Its subcellular location is the mitochondrion. In Mus musculus (Mouse), this protein is Small ribosomal subunit protein uS12m (Mrps12).